Here is a 189-residue protein sequence, read N- to C-terminus: MLLSDRDIRAELSAGRLGIDPFDDSMVQPSSVDVRLDSLFRVFNNTRYTHIDPAQRQDELTTLVEPAEGEPFVLHPGEFVLGSTLEVCSLPDDLAGRLEGKSSLGRLGLLTHSTAGFIDPGFNGHITLELSNVANLPITLWPGMKIGQLCLLRLSSAAEHPYGSSAVGSKYQGQRGPTPSKAYLNFAQR.

DCTP-binding positions include 101-106 (KSSLGR), Asp119, 127-129 (TLE), Gln148, Tyr162, and Gln174. Glu129 (proton donor/acceptor) is an active-site residue.

Belongs to the dCTP deaminase family. In terms of assembly, homotrimer.

The catalysed reaction is dCTP + 2 H2O = dUMP + NH4(+) + diphosphate. It participates in pyrimidine metabolism; dUMP biosynthesis; dUMP from dCTP: step 1/1. In terms of biological role, bifunctional enzyme that catalyzes both the deamination of dCTP to dUTP and the hydrolysis of dUTP to dUMP without releasing the toxic dUTP intermediate. The polypeptide is dCTP deaminase, dUMP-forming (Rhodococcus opacus (strain B4)).